The following is a 216-amino-acid chain: Peroxiredoxin (216 aa).

Residues 2–158 enclose the Thioredoxin domain; it reads VVIGEKFPEV…ILRLVKALKV (157 aa). The Cysteine sulfenic acid (-SOH) intermediate role is filled by Cys46. Arg121 lines the substrate pocket. Cys205 and Cys211 are joined by a disulfide.

The protein belongs to the peroxiredoxin family. Prx6 subfamily. As to quaternary structure, homodecamer. Pentamer of dimers that assemble into a ring structure.

The protein resides in the cytoplasm. The enzyme catalyses a hydroperoxide + [thioredoxin]-dithiol = an alcohol + [thioredoxin]-disulfide + H2O. In terms of biological role, thiol-specific peroxidase that catalyzes the reduction of hydrogen peroxide and organic hydroperoxides to water and alcohols, respectively. Plays a role in cell protection against oxidative stress by detoxifying peroxides. The polypeptide is Peroxiredoxin (Thermococcus kodakarensis (strain ATCC BAA-918 / JCM 12380 / KOD1) (Pyrococcus kodakaraensis (strain KOD1))).